We begin with the raw amino-acid sequence, 420 residues long: tRNA (guanine-N(7)-)-methyltransferase non-catalytic subunit TRM82 (420 aa).

Basic and acidic residues predominate over residues 59–68 (KENDSKRQKS). The disordered stretch occupies residues 59 to 82 (KENDSKRQKSESGQAKVSKIPTPG). WD repeat units lie at residues 87-127 (PIYN…DNCL), 179-220 (GHVS…VIKN), 224-266 (GHHE…AKIE), and 340-379 (SYEDNVLDMCYIEATNTLISAHDSDKNQLFQQQKFDEETN).

It belongs to the WD repeat TRM82 family. As to quaternary structure, forms a heterodimer with the catalytic subunit TRM8.

It is found in the nucleus. The protein operates within tRNA modification; N(7)-methylguanine-tRNA biosynthesis. Required for the formation of N(7)-methylguanine at position 46 (m7G46) in tRNA. In the complex, it is required to stabilize and induce conformational changes of the catalytic subunit. The sequence is that of tRNA (guanine-N(7)-)-methyltransferase non-catalytic subunit TRM82 from Meyerozyma guilliermondii (strain ATCC 6260 / CBS 566 / DSM 6381 / JCM 1539 / NBRC 10279 / NRRL Y-324) (Yeast).